Reading from the N-terminus, the 388-residue chain is Xylose isomerase (388 aa).

Active-site residues include His-54 and Asp-57. Mg(2+) contacts are provided by Glu-181, Glu-217, His-220, Asp-245, Asp-255, Asp-257, and Asp-287.

It belongs to the xylose isomerase family. In terms of assembly, homotetramer. The cofactor is Mg(2+).

Its subcellular location is the cytoplasm. It catalyses the reaction alpha-D-xylose = alpha-D-xylulofuranose. The sequence is that of Xylose isomerase from Streptomyces corchorusii (Streptomyces chibaensis).